The following is a 190-amino-acid chain: Protein GrpE (190 aa).

The span at 1 to 18 (MTETPNTSSEEIQTSEPS) shows a compositional bias: polar residues. The interval 1-21 (MTETPNTSSEEIQTSEPSPDN) is disordered.

This sequence belongs to the GrpE family. In terms of assembly, homodimer.

It is found in the cytoplasm. Functionally, participates actively in the response to hyperosmotic and heat shock by preventing the aggregation of stress-denatured proteins, in association with DnaK and GrpE. It is the nucleotide exchange factor for DnaK and may function as a thermosensor. Unfolded proteins bind initially to DnaJ; upon interaction with the DnaJ-bound protein, DnaK hydrolyzes its bound ATP, resulting in the formation of a stable complex. GrpE releases ADP from DnaK; ATP binding to DnaK triggers the release of the substrate protein, thus completing the reaction cycle. Several rounds of ATP-dependent interactions between DnaJ, DnaK and GrpE are required for fully efficient folding. This chain is Protein GrpE, found in Chlamydia trachomatis serovar L2 (strain ATCC VR-902B / DSM 19102 / 434/Bu).